The chain runs to 1097 residues: Transmembrane protein 132D (1097 aa).

Residues M1–G30 form the signal peptide. Topologically, residues R31 to D913 are extracellular. The span at D233 to K245 shows a compositional bias: basic and acidic residues. Residues D233–L263 form a disordered region. A helical transmembrane segment spans residues L914–I934. Residues N935–V1097 lie on the Cytoplasmic side of the membrane. A disordered region spans residues M1021 to R1042.

Belongs to the TMEM132 family. As to expression, expressed in mature oligodendrocytes in the white and gray matter of the brain.

It is found in the membrane. Functionally, regulates neuronal morphology via inhibition of the WAVE regulatory complex (WCR), a complex that controls F-actin cytoskeletal dynamics. The protein is Transmembrane protein 132D (Tmem132d) of Mus musculus (Mouse).